A 177-amino-acid chain; its full sequence is Large ribosomal subunit protein uL10 (177 aa).

This sequence belongs to the universal ribosomal protein uL10 family. In terms of assembly, part of the ribosomal stalk of the 50S ribosomal subunit. The N-terminus interacts with L11 and the large rRNA to form the base of the stalk. The C-terminus forms an elongated spine to which L12 dimers bind in a sequential fashion forming a multimeric L10(L12)X complex.

Forms part of the ribosomal stalk, playing a central role in the interaction of the ribosome with GTP-bound translation factors. The chain is Large ribosomal subunit protein uL10 from Mycobacterium leprae (strain Br4923).